Here is a 447-residue protein sequence, read N- to C-terminus: Glutamate--tRNA ligase 1 (447 aa).

The 'HIGH' region motif lies at 10 to 20 (PSPTGMLHVGN). A 'KMSKS' region motif is present at residues 240-244 (KISKR). Lysine 243 is an ATP binding site.

This sequence belongs to the class-I aminoacyl-tRNA synthetase family. Glutamate--tRNA ligase type 1 subfamily. Monomer.

The protein localises to the cytoplasm. It carries out the reaction tRNA(Glu) + L-glutamate + ATP = L-glutamyl-tRNA(Glu) + AMP + diphosphate. Catalyzes the attachment of glutamate to tRNA(Glu) in a two-step reaction: glutamate is first activated by ATP to form Glu-AMP and then transferred to the acceptor end of tRNA(Glu). The chain is Glutamate--tRNA ligase 1 from Rickettsia felis (strain ATCC VR-1525 / URRWXCal2) (Rickettsia azadi).